A 554-amino-acid polypeptide reads, in one-letter code: Glucose-6-phosphate isomerase (554 aa).

E359 serves as the catalytic Proton donor. Active-site residues include H390 and K518.

Belongs to the GPI family.

Its subcellular location is the cytoplasm. It carries out the reaction alpha-D-glucose 6-phosphate = beta-D-fructose 6-phosphate. It participates in carbohydrate biosynthesis; gluconeogenesis. The protein operates within carbohydrate degradation; glycolysis; D-glyceraldehyde 3-phosphate and glycerone phosphate from D-glucose: step 2/4. Functionally, catalyzes the reversible isomerization of glucose-6-phosphate to fructose-6-phosphate. The protein is Glucose-6-phosphate isomerase of Pseudomonas putida (strain GB-1).